A 159-amino-acid chain; its full sequence is Putative ribosomal RNA large subunit methyltransferase H (159 aa).

Residues Leu-76, Gly-108, and 127 to 132 contribute to the S-adenosyl-L-methionine site; that span reads FSKMTF.

It belongs to the RNA methyltransferase RlmH family.

It localises to the cytoplasm. The catalysed reaction is pseudouridine(1915) in 23S rRNA + S-adenosyl-L-methionine = N(3)-methylpseudouridine(1915) in 23S rRNA + S-adenosyl-L-homocysteine + H(+). Specifically methylates the pseudouridine at position 1915 (m3Psi1915) in 23S rRNA. This Methanococcus maripaludis (strain C6 / ATCC BAA-1332) protein is Putative ribosomal RNA large subunit methyltransferase H.